We begin with the raw amino-acid sequence, 253 residues long: Ribosome-inactivating protein saporin-5 (253 aa).

The active site involves glutamate 176.

The protein belongs to the ribosome-inactivating protein family. Type 1 RIP subfamily.

It carries out the reaction Endohydrolysis of the N-glycosidic bond at one specific adenosine on the 28S rRNA.. Ribosome-inactivating protein of type 1, inhibits protein synthesis in animal cells. In Saponaria officinalis (Common soapwort), this protein is Ribosome-inactivating protein saporin-5 (SAP5).